The chain runs to 487 residues: UDP-N-acetylmuramate--L-alanine ligase (487 aa).

130 to 136 lines the ATP pocket; the sequence is GTHGKTT.

This sequence belongs to the MurCDEF family.

Its subcellular location is the cytoplasm. The catalysed reaction is UDP-N-acetyl-alpha-D-muramate + L-alanine + ATP = UDP-N-acetyl-alpha-D-muramoyl-L-alanine + ADP + phosphate + H(+). It participates in cell wall biogenesis; peptidoglycan biosynthesis. Functionally, cell wall formation. This is UDP-N-acetylmuramate--L-alanine ligase from Photobacterium profundum (strain SS9).